The primary structure comprises 302 residues: Bifunctional protein FolD (302 aa).

Residues 165-167 (GRS), Ser-190, and Ile-231 contribute to the NADP(+) site.

The protein belongs to the tetrahydrofolate dehydrogenase/cyclohydrolase family. Homodimer.

The enzyme catalyses (6R)-5,10-methylene-5,6,7,8-tetrahydrofolate + NADP(+) = (6R)-5,10-methenyltetrahydrofolate + NADPH. The catalysed reaction is (6R)-5,10-methenyltetrahydrofolate + H2O = (6R)-10-formyltetrahydrofolate + H(+). It functions in the pathway one-carbon metabolism; tetrahydrofolate interconversion. In terms of biological role, catalyzes the oxidation of 5,10-methylenetetrahydrofolate to 5,10-methenyltetrahydrofolate and then the hydrolysis of 5,10-methenyltetrahydrofolate to 10-formyltetrahydrofolate. In Prochlorococcus marinus (strain MIT 9211), this protein is Bifunctional protein FolD.